The sequence spans 1134 residues: Myosin-4 (1134 aa).

One can recognise a Myosin N-terminal SH3-like domain in the interval 110 to 160 (REKLCVWCRVAANGQWHLGKIHSTSSSDDVCVMLSANDDVRTMEEIFPANP). Positions 164–830 (EGVEDLTQLS…VISVLEERKK (667 aa)) constitute a Myosin motor domain. ATP is bound by residues 255–262 (GESGAGKT) and 304–312 (NDNSSRFGK). 2 actin-binding regions span residues 589–623 (LIEK…KQHL) and 710–732 (LFKL…KPNS). IQ domains follow at residues 832–861 (VLRG…AAVI), 855–884 (MRNA…SAIV), and 891–920 (ELDA…KNKP). Positions 913-939 (STQQKNKPRNEKKKTRRKSTKRVSEDK) are disordered. Basic residues predominate over residues 918 to 933 (NKPRNEKKKTRRKSTK). Positions 953–999 (LADLQSRVLKVEAAIMQKEDENTALQEELQRFEERWLENETRMKSME) form a coiled coil.

The protein belongs to the TRAFAC class myosin-kinesin ATPase superfamily. Myosin family. Plant myosin class VIII subfamily. As to quaternary structure, homodimer.

Myosin heavy chain that is required for the cell cycle-regulated transport of various organelles and proteins for their segregation. Functions by binding with its tail domain to receptor proteins on organelles and exerting force with its N-terminal motor domain against actin filaments, thereby transporting its cargo along polarized actin cables. The polypeptide is Myosin-4 (VIII-B) (Arabidopsis thaliana (Mouse-ear cress)).